Reading from the N-terminus, the 208-residue chain is 2-phospho-L-lactate guanylyltransferase (208 aa).

It belongs to the CofC family. As to quaternary structure, homodimer.

The catalysed reaction is (2S)-2-phospholactate + GTP + H(+) = (2S)-lactyl-2-diphospho-5'-guanosine + diphosphate. It participates in cofactor biosynthesis; coenzyme F420 biosynthesis. Its function is as follows. Guanylyltransferase that catalyzes the activation of (2S)-2-phospholactate (2-PL) as (2S)-lactyl-2-diphospho-5'-guanosine, via the condensation of 2-PL with GTP. It is involved in the biosynthesis of coenzyme F420, a hydride carrier cofactor. The polypeptide is 2-phospho-L-lactate guanylyltransferase (Haloarcula marismortui (strain ATCC 43049 / DSM 3752 / JCM 8966 / VKM B-1809) (Halobacterium marismortui)).